A 316-amino-acid chain; its full sequence is Olfactory receptor 4N4C (316 aa).

Residues 1–26 lie on the Cytoplasmic side of the membrane; it reads MKIANNTVVTEFILLGLTQSQDIQLL. The chain crosses the membrane as a helical span at residues 27–47; the sequence is VFVLILIFYLIILPGNFLIIF. The Extracellular segment spans residues 48-56; it reads TIRSDPGLT. The chain crosses the membrane as a helical span at residues 57–77; it reads APLYLFLGNLAFLDASYSFIV. Over 78 to 99 the chain is Cytoplasmic; the sequence is APRMLVDFLSEKKVISYRGCIT. Cysteines 97 and 179 form a disulfide. A helical membrane pass occupies residues 100 to 120; that stretch reads QLFFLHFLGGGEGLLLVVMAF. The Extracellular portion of the chain corresponds to 121 to 143; the sequence is DRYIAICRPLHCSTVMNPRACYA. The chain crosses the membrane as a helical span at residues 144 to 164; the sequence is MMLALWLGGFVHSIIQVVLIL. Topologically, residues 165–204 are cytoplasmic; the sequence is RLPFCGPNQLDNFFCDVRQVIKLACTDMFVVELLMVFNSG. A helical membrane pass occupies residues 205–225; it reads LMTLLCFLGLLASYAVILCHV. Over 226-243 the chain is Extracellular; sequence RRAASEGKNKAMSTCTTR. A helical membrane pass occupies residues 244-264; that stretch reads VIIILLMFGPAIFIYICPFRA. The Cytoplasmic portion of the chain corresponds to 265–268; that stretch reads LPAD. A helical transmembrane segment spans residues 269–289; sequence KMVSLFHTVIFPLMNPMIYTL. Residues 290–316 are Extracellular-facing; the sequence is RNQEVKTSMKRLLSRHVVCQVDFIIRN.

It belongs to the G-protein coupled receptor 1 family.

The protein localises to the membrane. In terms of biological role, odorant receptor. This chain is Olfactory receptor 4N4C, found in Homo sapiens (Human).